We begin with the raw amino-acid sequence, 236 residues long: Ribonuclease PH (236 aa).

Residues arginine 86 and glycine 124–arginine 126 each bind phosphate.

This sequence belongs to the RNase PH family. In terms of assembly, homohexameric ring arranged as a trimer of dimers.

The enzyme catalyses tRNA(n+1) + phosphate = tRNA(n) + a ribonucleoside 5'-diphosphate. In terms of biological role, phosphorolytic 3'-5' exoribonuclease that plays an important role in tRNA 3'-end maturation. Removes nucleotide residues following the 3'-CCA terminus of tRNAs; can also add nucleotides to the ends of RNA molecules by using nucleoside diphosphates as substrates, but this may not be physiologically important. Probably plays a role in initiation of 16S rRNA degradation (leading to ribosome degradation) during starvation. The protein is Ribonuclease PH of Thermodesulfovibrio yellowstonii (strain ATCC 51303 / DSM 11347 / YP87).